Here is a 77-residue protein sequence, read N- to C-terminus: MATFDDVKAVVVEQLSIDADAVKMESKIIEDLGADSLDVVELIMALEEKFEIEIPDSDAEKLIKIEDVVNYIDNLKK.

Residues 1-76 (MATFDDVKAV…DVVNYIDNLK (76 aa)) form the Carrier domain. Ser-36 bears the O-(pantetheine 4'-phosphoryl)serine mark.

Belongs to the acyl carrier protein (ACP) family. 4'-phosphopantetheine is transferred from CoA to a specific serine of apo-ACP by AcpS. This modification is essential for activity because fatty acids are bound in thioester linkage to the sulfhydryl of the prosthetic group.

It is found in the cytoplasm. It participates in lipid metabolism; fatty acid biosynthesis. Carrier of the growing fatty acid chain in fatty acid biosynthesis. This is Acyl carrier protein from Campylobacter jejuni (strain RM1221).